A 496-amino-acid polypeptide reads, in one-letter code: Glutamyl-tRNA(Gln) amidotransferase subunit A (496 aa).

Catalysis depends on charge relay system residues K79 and S159. S183 serves as the catalytic Acyl-ester intermediate.

It belongs to the amidase family. GatA subfamily. In terms of assembly, heterotrimer of A, B and C subunits.

It catalyses the reaction L-glutamyl-tRNA(Gln) + L-glutamine + ATP + H2O = L-glutaminyl-tRNA(Gln) + L-glutamate + ADP + phosphate + H(+). In terms of biological role, allows the formation of correctly charged Gln-tRNA(Gln) through the transamidation of misacylated Glu-tRNA(Gln) in organisms which lack glutaminyl-tRNA synthetase. The reaction takes place in the presence of glutamine and ATP through an activated gamma-phospho-Glu-tRNA(Gln). This chain is Glutamyl-tRNA(Gln) amidotransferase subunit A, found in Bartonella quintana (strain Toulouse) (Rochalimaea quintana).